A 428-amino-acid polypeptide reads, in one-letter code: Secernin-2 (428 aa).

Residue cysteine 10 is part of the active site.

The protein belongs to the peptidase C69 family. Secernin subfamily.

The sequence is that of Secernin-2 (scrn2) from Xenopus laevis (African clawed frog).